Reading from the N-terminus, the 113-residue chain is Hydrogenase maturation factor HybF (113 aa).

Ni(2+)-binding residues include histidine 2 and glutamate 3. Zn(2+)-binding residues include cysteine 73, cysteine 76, cysteine 89, and cysteine 92.

This sequence belongs to the HypA/HybF family. HybF subfamily.

Involved in the maturation of [NiFe] hydrogenases. Required for nickel insertion into the metal center of the hydrogenase. In Escherichia coli O6:H1 (strain CFT073 / ATCC 700928 / UPEC), this protein is Hydrogenase maturation factor HybF.